We begin with the raw amino-acid sequence, 85 residues long: Large ribosomal subunit protein bL27 (85 aa).

Positions 1–20 (MATKKAGGSTRNGRDSEAKR) are disordered.

The protein belongs to the bacterial ribosomal protein bL27 family.

This is Large ribosomal subunit protein bL27 from Haemophilus influenzae (strain ATCC 51907 / DSM 11121 / KW20 / Rd).